A 726-amino-acid polypeptide reads, in one-letter code: Catalase-peroxidase (726 aa).

Residues 1–33 are disordered; that stretch reads MSTTDDTHNTLSTGKCPFHQGGHDRSAGAGTAS. The tryptophyl-tyrosyl-methioninium (Trp-Tyr) (with M-252) cross-link spans 105-226; that stretch reads WHGAGTYRSI…LGATEMGLIY (122 aa). His-106 acts as the Proton acceptor in catalysis. Residues 226-252 constitute a cross-link (tryptophyl-tyrosyl-methioninium (Tyr-Met) (with W-105)); sequence YVNPEGPDHSGEPLSAAAAIRATFGNM. Residue His-267 coordinates heme b.

It belongs to the peroxidase family. Peroxidase/catalase subfamily. In terms of assembly, homodimer or homotetramer. Heme b is required as a cofactor. In terms of processing, formation of the three residue Trp-Tyr-Met cross-link is important for the catalase, but not the peroxidase activity of the enzyme.

It carries out the reaction H2O2 + AH2 = A + 2 H2O. It catalyses the reaction 2 H2O2 = O2 + 2 H2O. In terms of biological role, bifunctional enzyme with both catalase and broad-spectrum peroxidase activity. The polypeptide is Catalase-peroxidase (Salmonella paratyphi A (strain ATCC 9150 / SARB42)).